Consider the following 505-residue polypeptide: Amidophosphoribosyltransferase (505 aa).

The Nucleophile role is filled by Cys-2. The region spanning 2–235 (CGIVGIVSQS…AGEAVYVTFD (234 aa)) is the Glutamine amidotransferase type-2 domain. Thr-306, Asp-368, and Asp-369 together coordinate Mg(2+). The disordered stretch occupies residues 484-505 (RNDNAKKKREKQASNLEIYNEQ). A compositionally biased stretch (polar residues) spans 496-505 (ASNLEIYNEQ).

In the C-terminal section; belongs to the purine/pyrimidine phosphoribosyltransferase family. It depends on Mg(2+) as a cofactor.

The catalysed reaction is 5-phospho-beta-D-ribosylamine + L-glutamate + diphosphate = 5-phospho-alpha-D-ribose 1-diphosphate + L-glutamine + H2O. Its pathway is purine metabolism; IMP biosynthesis via de novo pathway; N(1)-(5-phospho-D-ribosyl)glycinamide from 5-phospho-alpha-D-ribose 1-diphosphate: step 1/2. Catalyzes the formation of phosphoribosylamine from phosphoribosylpyrophosphate (PRPP) and glutamine. In Haemophilus influenzae (strain ATCC 51907 / DSM 11121 / KW20 / Rd), this protein is Amidophosphoribosyltransferase.